We begin with the raw amino-acid sequence, 37 residues long: Calcitonin gene-related peptide 1 (37 aa).

Cys2 and Cys7 are joined by a disulfide. Phe37 carries the post-translational modification Phenylalanine amide.

This sequence belongs to the calcitonin family.

It is found in the secreted. In terms of biological role, CGRP1/CALCA is a peptide hormone that induces vasodilation mediated by the CALCRL-RAMP1 receptor complex. Dilates a variety of vessels including the coronary, cerebral and systemic vasculature. Its abundance in the CNS also points toward a neurotransmitter or neuromodulator role. It also elevates platelet cAMP. CGRP1 can also bind and activate CALCR-RAMP1 (AMYR1) receptor complex. The chain is Calcitonin gene-related peptide 1 (CALCA) from Ovis aries (Sheep).